Consider the following 211-residue polypeptide: Phosphoheptose isomerase (211 aa).

Residues 50–211 (IAGTFEDGGK…VERMLGYCRL (162 aa)) form the SIS domain. Substrate is bound at residue 65–67 (NGG). Residues His74 and Glu78 each coordinate Zn(2+). Residues Glu78, 109-110 (ND), 135-137 (STS), Ser140, and Gln188 each bind substrate. Zn(2+)-binding residues include Gln188 and His196.

This sequence belongs to the SIS family. GmhA subfamily. It depends on Zn(2+) as a cofactor.

Its subcellular location is the cytoplasm. The catalysed reaction is 2 D-sedoheptulose 7-phosphate = D-glycero-alpha-D-manno-heptose 7-phosphate + D-glycero-beta-D-manno-heptose 7-phosphate. It functions in the pathway carbohydrate biosynthesis; D-glycero-D-manno-heptose 7-phosphate biosynthesis; D-glycero-alpha-D-manno-heptose 7-phosphate and D-glycero-beta-D-manno-heptose 7-phosphate from sedoheptulose 7-phosphate: step 1/1. Its function is as follows. Catalyzes the isomerization of sedoheptulose 7-phosphate in D-glycero-D-manno-heptose 7-phosphate. The chain is Phosphoheptose isomerase from Pelodictyon phaeoclathratiforme (strain DSM 5477 / BU-1).